Here is a 392-residue protein sequence, read N- to C-terminus: Formate-dependent phosphoribosylglycinamide formyltransferase (392 aa).

Residues 22–23 (EL) and Glu82 contribute to the N(1)-(5-phospho-beta-D-ribosyl)glycinamide site. ATP is bound by residues Arg114, Lys155, 160-165 (SSGKGQ), 195-198 (EGVV), and Glu203. The ATP-grasp domain occupies 119–308 (RLAAEELQLP…EFALHVRAFL (190 aa)). 2 residues coordinate Mg(2+): Glu267 and Glu279. Residues Asp286, Lys355, and 362–363 (RR) each bind N(1)-(5-phospho-beta-D-ribosyl)glycinamide.

This sequence belongs to the PurK/PurT family. Homodimer.

The catalysed reaction is N(1)-(5-phospho-beta-D-ribosyl)glycinamide + formate + ATP = N(2)-formyl-N(1)-(5-phospho-beta-D-ribosyl)glycinamide + ADP + phosphate + H(+). Its pathway is purine metabolism; IMP biosynthesis via de novo pathway; N(2)-formyl-N(1)-(5-phospho-D-ribosyl)glycinamide from N(1)-(5-phospho-D-ribosyl)glycinamide (formate route): step 1/1. Functionally, involved in the de novo purine biosynthesis. Catalyzes the transfer of formate to 5-phospho-ribosyl-glycinamide (GAR), producing 5-phospho-ribosyl-N-formylglycinamide (FGAR). Formate is provided by PurU via hydrolysis of 10-formyl-tetrahydrofolate. This chain is Formate-dependent phosphoribosylglycinamide formyltransferase, found in Shigella boydii serotype 18 (strain CDC 3083-94 / BS512).